The sequence spans 215 residues: Meiotic chromosome segregation protein P8B7.28c (215 aa).

The tract at residues 159–202 is disordered; the sequence is TINSEYADDVSDNTDEERTESKGQQESNSAEEYDDDDSDEDRME. Composition is skewed to acidic residues over residues 164-176 and 187-201; these read YADD…DEER and SAEE…EDRM.

It localises to the nucleus. Its subcellular location is the nucleolus. Functionally, required for meiotic chromosome segregation. The polypeptide is Meiotic chromosome segregation protein P8B7.28c (Schizosaccharomyces pombe (strain 972 / ATCC 24843) (Fission yeast)).